The primary structure comprises 131 residues: uncharacterized protein (131 aa).

This is an uncharacterized protein from Caenorhabditis elegans.